An 80-amino-acid chain; its full sequence is uncharacterized protein (80 aa).

A signal peptide spans 1–21 (MKKVLYGIFAISALAATSAWA). Residues 59 to 80 (AATGGGDGSNTGTTTTTTTSTQ) form a disordered region. Residues 68-80 (NTGTTTTTTTSTQ) show a composition bias toward low complexity.

This is an uncharacterized protein from Escherichia coli O157:H7.